A 301-amino-acid chain; its full sequence is Small ribosomal subunit protein uS2 (301 aa).

Residues 282 to 301 (VRKQPVSENENVEAAAAEQK) form a disordered region. Residues 289–301 (ENENVEAAAAEQK) show a composition bias toward low complexity.

Belongs to the universal ribosomal protein uS2 family.

The protein is Small ribosomal subunit protein uS2 of Koribacter versatilis (strain Ellin345).